We begin with the raw amino-acid sequence, 514 residues long: 2,3-bisphosphoglycerate-independent phosphoglycerate mutase (514 aa).

The Mn(2+) site is built by aspartate 13 and serine 63. Residue serine 63 is the Phosphoserine intermediate of the active site. Substrate is bound by residues histidine 124, 154–155 (RD), arginine 186, arginine 192, 258–261 (RADR), and lysine 332. Mn(2+)-binding residues include aspartate 399, histidine 403, aspartate 440, histidine 441, and histidine 459.

It belongs to the BPG-independent phosphoglycerate mutase family. In terms of assembly, monomer. It depends on Mn(2+) as a cofactor.

It catalyses the reaction (2R)-2-phosphoglycerate = (2R)-3-phosphoglycerate. It functions in the pathway carbohydrate degradation; glycolysis; pyruvate from D-glyceraldehyde 3-phosphate: step 3/5. Functionally, catalyzes the interconversion of 2-phosphoglycerate and 3-phosphoglycerate. The chain is 2,3-bisphosphoglycerate-independent phosphoglycerate mutase from Legionella pneumophila (strain Lens).